The chain runs to 750 residues: Photosystem I P700 chlorophyll a apoprotein A1 (750 aa).

8 consecutive transmembrane segments (helical) span residues 70–93, 156–179, 195–219, 291–309, 346–369, 385–411, 433–455, and 531–549; these read VFSA…FHGA, LYCT…FHYH, LNHH…HVSL, IAHH…GHMY, WHAQ…HHMY, LSLF…IFMV, AIIS…LYIH, and FLVH…LILL. 2 residues coordinate [4Fe-4S] cluster: C573 and C582. 2 helical membrane-spanning segments follow: residues 589-610 and 664-686; these read HVFL…HFSW and LSAY…MFLF. H675 contacts chlorophyll a'. Chlorophyll a-binding residues include M683 and Y691. W692 lines the phylloquinone pocket. The chain crosses the membrane as a helical span at residues 724 to 744; it reads AVGVTHYLLGGIATTWAFFLA.

This sequence belongs to the PsaA/PsaB family. As to quaternary structure, the PsaA/B heterodimer binds the P700 chlorophyll special pair and subsequent electron acceptors. PSI consists of a core antenna complex that captures photons, and an electron transfer chain that converts photonic excitation into a charge separation. The eukaryotic PSI reaction center is composed of at least 11 subunits. Requires P700 is a chlorophyll a/chlorophyll a' dimer, A0 is one or more chlorophyll a, A1 is one or both phylloquinones and FX is a shared 4Fe-4S iron-sulfur center. as cofactor.

The protein localises to the plastid. It localises to the chloroplast thylakoid membrane. It catalyses the reaction reduced [plastocyanin] + hnu + oxidized [2Fe-2S]-[ferredoxin] = oxidized [plastocyanin] + reduced [2Fe-2S]-[ferredoxin]. In terms of biological role, psaA and PsaB bind P700, the primary electron donor of photosystem I (PSI), as well as the electron acceptors A0, A1 and FX. PSI is a plastocyanin-ferredoxin oxidoreductase, converting photonic excitation into a charge separation, which transfers an electron from the donor P700 chlorophyll pair to the spectroscopically characterized acceptors A0, A1, FX, FA and FB in turn. Oxidized P700 is reduced on the lumenal side of the thylakoid membrane by plastocyanin. This chain is Photosystem I P700 chlorophyll a apoprotein A1, found in Acorus calamus (Sweet flag).